Reading from the N-terminus, the 245-residue chain is tRNA pseudouridine synthase A (245 aa).

Asp-52 serves as the catalytic Nucleophile. Tyr-111 serves as a coordination point for substrate.

It belongs to the tRNA pseudouridine synthase TruA family. In terms of assembly, homodimer.

It catalyses the reaction uridine(38/39/40) in tRNA = pseudouridine(38/39/40) in tRNA. Its function is as follows. Formation of pseudouridine at positions 38, 39 and 40 in the anticodon stem and loop of transfer RNAs. The protein is tRNA pseudouridine synthase A of Rickettsia typhi (strain ATCC VR-144 / Wilmington).